The primary structure comprises 336 residues: Holliday junction branch migration complex subunit RuvB (336 aa).

The large ATPase domain (RuvB-L) stretch occupies residues 4 to 184 (ADRLISADAI…FGIVQRLEFY (181 aa)). ATP contacts are provided by residues arginine 24, glycine 65, lysine 68, threonine 69, threonine 70, 131–133 (EDY), arginine 174, tyrosine 184, and arginine 221. Threonine 69 contacts Mg(2+). Residues 185–255 (NVADLQYIVG…VATQALDMLA (71 aa)) are small ATPAse domain (RuvB-S). The head domain (RuvB-H) stretch occupies residues 258-336 (TEGFDYMDRK…HFGLTREDLG (79 aa)). Residues arginine 294, arginine 313, and arginine 318 each contribute to the DNA site.

It belongs to the RuvB family. Homohexamer. Forms an RuvA(8)-RuvB(12)-Holliday junction (HJ) complex. HJ DNA is sandwiched between 2 RuvA tetramers; dsDNA enters through RuvA and exits via RuvB. An RuvB hexamer assembles on each DNA strand where it exits the tetramer. Each RuvB hexamer is contacted by two RuvA subunits (via domain III) on 2 adjacent RuvB subunits; this complex drives branch migration. In the full resolvosome a probable DNA-RuvA(4)-RuvB(12)-RuvC(2) complex forms which resolves the HJ.

It localises to the cytoplasm. The enzyme catalyses ATP + H2O = ADP + phosphate + H(+). The RuvA-RuvB-RuvC complex processes Holliday junction (HJ) DNA during genetic recombination and DNA repair, while the RuvA-RuvB complex plays an important role in the rescue of blocked DNA replication forks via replication fork reversal (RFR). RuvA specifically binds to HJ cruciform DNA, conferring on it an open structure. The RuvB hexamer acts as an ATP-dependent pump, pulling dsDNA into and through the RuvAB complex. RuvB forms 2 homohexamers on either side of HJ DNA bound by 1 or 2 RuvA tetramers; 4 subunits per hexamer contact DNA at a time. Coordinated motions by a converter formed by DNA-disengaged RuvB subunits stimulates ATP hydrolysis and nucleotide exchange. Immobilization of the converter enables RuvB to convert the ATP-contained energy into a lever motion, pulling 2 nucleotides of DNA out of the RuvA tetramer per ATP hydrolyzed, thus driving DNA branch migration. The RuvB motors rotate together with the DNA substrate, which together with the progressing nucleotide cycle form the mechanistic basis for DNA recombination by continuous HJ branch migration. Branch migration allows RuvC to scan DNA until it finds its consensus sequence, where it cleaves and resolves cruciform DNA. The protein is Holliday junction branch migration complex subunit RuvB of Pectobacterium carotovorum subsp. carotovorum (strain PC1).